Here is a 70-residue protein sequence, read N- to C-terminus: DNA gyrase inhibitor YacG (70 aa).

Zn(2+)-binding residues include Cys-20, Cys-23, Cys-35, and Cys-39.

It belongs to the DNA gyrase inhibitor YacG family. In terms of assembly, interacts with GyrB. It depends on Zn(2+) as a cofactor.

Its function is as follows. Inhibits all the catalytic activities of DNA gyrase by preventing its interaction with DNA. Acts by binding directly to the C-terminal domain of GyrB, which probably disrupts DNA binding by the gyrase. The chain is DNA gyrase inhibitor YacG from Rhizobium leguminosarum bv. trifolii (strain WSM2304).